The primary structure comprises 1942 residues: MSSDAEMAVFGEAAPYLRKSEKERIEAQNKPFDAKSSVFVVDAKESFVKATVQSREGGKVTAKTEGGTTVTVKDDQVYPMNPPKYDKIEDMAMMTHLHEPAVLYNLKERYAAWMIYTYSGLFCVTVNPYKWLPVYNAEVVAAYRGKKRQEAPPHIFSISDNAYQFMLTDRENQSILITGESGAGKTVNTKRVIQYFATIAVTGEKKKEEATSGKMQGTLEDQIISANPLLEAFGNAKTVRNDNSSRFGKFIRIHFGTTGKLASADIETYLLEKSRVTFQLKAERSYHIFYQIMSNKKPDLIEMLLITTNPYDYAFVSQGEITVPSIDDQEELMATDSAIDILGFTSDERVSIYKLTGAVMHYGNMKFKQKQREEQAEPDGTEVADKAAYLQNLNSADLLKALCYPRVKVGNEYVTKGQTVQQVYNSVGALAKAVYEKMFLWMVTRINQQLDTKQPRQYFIGVLDIAGFEIFDFNSLEQLCINFTNEKLQQFFNHHMFVLEQEEYKKEGIEWEFIDFGMDLAACIELIEKPMGIFSILEEECMFPKATDTSFKNKLYEQHLGKSNNFQKPKPAKGKVEAHFSLVHYAGTVDYNIAGWLDKNKDPLNETVVGLYQKSSMKTLAYLFSGAAAAAEAESGGGGGKKGAKKKGSSFQTVSALFRENLNKLMTNLRSTHPHFVRCIIPNETKTPGAMEHELVLHQLRCNGVLEGIRICRKGFPSRILYADFKQRYKVLNASAIPEGQFIDSKKASEKLLGSIDIDHTQYKFGHTKVFFKAGLLGLLEEMRDDKLAQLITRTQAMCRGYLARVEYQKMVERRESIFCIQYNVRAFMNVKHWPWMKLYFKIKPLLKSAETEKEMANMKEEFEKAKENLAKAEAKRKELEEKMVALMQEKNDLQLQVQSEADSLADAEERCDQLIKTKIQLEAKIKEVTERAEDEEEINAELTAKKRKLEDECSELKKDIDDLELTLAKVEKEKHATENKVKNLTEEMAGLDETIAKLTKEKKALQEAHQQTLDDLQAEEDKVNTLTKAKIKLEQQVDDLEGSLEQEKKIRMDLERAKRKLEGDLKLAQESTMDVENDKQQLDEKLKKKEFEMSNLQSKIEDEQALGMQLQKKIKELQARIEELEEEIEAERASRAKAEKQRSDLSRELEEISERLEEAGGATSAQIEMNKKREAEFQKMRRDLEEATLQHEATAATLRKKHADSVAELGEQIDNLQRVKQKLEKEKSEMKMEIDDLASNMEVISKSKGNLEKMCRTLEDQVSELKTKEEEQQRLINELTAQRGRLQTESGEYSRQLDEKDSLVSQLSRGKQAFTQQIEELKRQLEEEIKAKSALAHALQSSRHDCDLLREQYEEEQEAKAELQRAMSKANSEVAQWRTKYETDAIQRTEELEEAKKKLAQRLQDAEEHVEAVNAKCASLEKTKQRLQNEVEDLMIDVERTNAACAALDKKQRNFDKILAEWKQKYEETHAELEASQKESRSLSTELFKIKNAYEESLDHLETLKRENKNLQQEISDLTEQIAEGGKRIHELEKIKKQIEQEKSELQAALEEAEASLEHEEGKILRIQLELNQVKSEIDRKIAEKDEEIDQLKRNHIRVVESMQSTLDAEIRSRNDAIRLKKKMEGDLNEMEIQLNHSNRMAAEALRNYRNTQGILKDTQLHLDDALRGQEDLKEQLAMVERRANLLQAEIEELRATLEQTERSRKIAEQELLDASERVQLLHTQNTSLINTKKKLETDISQIQGEMEDIVQEARNAEEKAKKAITDAAMMAEELKKEQDTSAHLERMKKNLEQTVKDLQHRLDEAEQLALKGGKKQIQKLEARVRELEGEVENEQKRNVEAIKGLRKHERRVKELTYQTEEDRKNVLRLQDLVDKLQSKVKAYKRQAEEAEEQSNVNLAKFRKIQHELEEAEERADIAESQVNKLRVKSREVHTKIISEE.

Residues 33–82 (DAKSSVFVVDAKESFVKATVQSREGGKVTAKTEGGTTVTVKDDQVYPMNP) enclose the Myosin N-terminal SH3-like domain. Position 36 is a phosphoserine (serine 36). Phosphothreonine is present on residues threonine 64 and threonine 69. A Myosin motor domain is found at 86–785 (DKIEDMAMMT…LLGLLEEMRD (700 aa)). Lysine 130 carries the post-translational modification N6,N6,N6-trimethyllysine. 179 to 186 (GESGAGKT) contacts ATP. Tyrosine 389 is subject to Phosphotyrosine. Phosphothreonine is present on threonine 419. At tyrosine 424 the chain carries Phosphotyrosine. The residue at position 625 (serine 625) is a Phosphoserine. An actin-binding region spans residues 662–684 (LNKLMTNLRSTHPHFVRCIIPNE). Position 760 is a pros-methylhistidine (histidine 760). Residues 764 to 778 (KFGHTKVFFKAGLLG) form an actin-binding region. In terms of domain architecture, IQ spans 788–817 (LAQLITRTQAMCRGYLARVEYQKMVERRES). Positions 846-1942 (LLKSAETEKE…EVHTKIISEE (1097 aa)) form a coiled coil. Phosphoserine is present on residues serine 1095, serine 1099, serine 1165, serine 1240, and serine 1246. A disordered region spans residues 1156-1175 (RLEEAGGATSAQIEMNKKRE). Threonine 1258 carries the phosphothreonine modification. Phosphoserine is present on serine 1264. Phosphothreonine is present on residues threonine 1268 and threonine 1289. Residues serine 1291, serine 1295, serine 1306, and serine 1309 each carry the phosphoserine modification. Tyrosine 1467 is subject to Phosphotyrosine. At threonine 1470 the chain carries Phosphothreonine. Serine 1477 is modified (phosphoserine). Tyrosine 1495 is modified (phosphotyrosine). A Phosphoserine modification is found at serine 1498. Threonine 1504 carries the phosphothreonine modification. Serine 1517 is subject to Phosphoserine. Position 1520 is a phosphothreonine (threonine 1520). A phosphoserine mark is found at serine 1545, serine 1557, serine 1577, serine 1603, serine 1606, serine 1717, and serine 1729. 2 positions are modified to phosphothreonine: threonine 1733 and threonine 1739. The residue at position 1742 (serine 1742) is a Phosphoserine.

It belongs to the TRAFAC class myosin-kinesin ATPase superfamily. Myosin family. As to quaternary structure, muscle myosin is a hexameric protein that consists of 2 heavy chain subunits (MHC), 2 alkali light chain subunits (MLC) and 2 regulatory light chain subunits (MLC-2). Interacts with SLC26A5. Expressed in the cochlea (at protein level). Strongly expressed in spiral ganglion neurons with axonal sprouts and supporting cells around hair cells. In the organ of Corti, it is expressed in inner and outer hair cells, and in supporting cells.

The protein resides in the cytoplasm. Its subcellular location is the myofibril. Functionally, required for normal hearing. It plays a role in cochlear amplification of auditory stimuli, likely through the positive regulation of prestin (SLC26A5) activity and outer hair cell (OHC) electromotility. The chain is Myosin-1 from Mus musculus (Mouse).